The primary structure comprises 356 residues: Nuclear hormone receptor family member nhr-169 (356 aa).

The segment at residues 16-90 is a DNA-binding region (nuclear receptor); the sequence is DPICSVCNFS…AGMKRSLVKE (75 aa). 2 NR C4-type zinc fingers span residues 19–40 and 56–72; these read CSVC…CSAC and CKKD…CRAC. An NR LBD domain is found at 144 to 356; that stretch reads DVSKILKTTP…KLYLHMGLPF (213 aa).

The protein belongs to the nuclear hormone receptor family.

The protein localises to the nucleus. Functionally, orphan nuclear receptor. The sequence is that of Nuclear hormone receptor family member nhr-169 (nhr-169) from Caenorhabditis elegans.